Reading from the N-terminus, the 199-residue chain is MNLPSPAPPTLVLASSSPYRAELLARLGLPFEICAPDIDETPLPQEQPEGLVARLAETKARVVGAKSPNALVIGSDQVAVLGQQILGKPKTHERALQQLRAASGQTVFFYTGLCLVNTLMGEAKTVVEPFQVQFRQLTEQQIDNYLQREQPYQCAGSFRSEGLGIALIQHLQGDDPNALVGLPLIRLTELLEQAGYPVL.

Aspartate 76 (proton acceptor) is an active-site residue.

Belongs to the Maf family. YceF subfamily. Requires a divalent metal cation as cofactor.

Its subcellular location is the cytoplasm. It carries out the reaction N(7)-methyl-GTP + H2O = N(7)-methyl-GMP + diphosphate + H(+). Functionally, nucleoside triphosphate pyrophosphatase that hydrolyzes 7-methyl-GTP (m(7)GTP). May have a dual role in cell division arrest and in preventing the incorporation of modified nucleotides into cellular nucleic acids. The chain is 7-methyl-GTP pyrophosphatase from Nitrosococcus oceani (strain ATCC 19707 / BCRC 17464 / JCM 30415 / NCIMB 11848 / C-107).